A 373-amino-acid chain; its full sequence is Muscleblind-like protein 2 (373 aa).

C3H1-type zinc fingers lie at residues 13–41 (WLTLEVCRQYQRGTCSRSDEECKFAHPPK), 47–73 (NGRVIACFDSLKGRCSRENCKYLHPPT), 176–204 (TDKLEVCREFQRGNCARGETDCRFAHPAD), and 212–238 (DNTVTVCMDYIKGRCMREKCKYFHPPA).

It belongs to the muscleblind family. Interacts with ITGA3.

Its subcellular location is the nucleus. The protein resides in the cytoplasm. Its function is as follows. Mediates pre-mRNA alternative splicing regulation. Acts either as activator or repressor of splicing on specific pre-mRNA targets. Inhibits cardiac troponin-T (TNNT2) pre-mRNA exon inclusion but induces insulin receptor (IR) pre-mRNA exon inclusion in muscle. Antagonizes the alternative splicing activity pattern of CELF proteins. RNA-binding protein that binds to 5'ACACCC-3' core sequence, termed zipcode, within the 3'UTR of ITGA3. Binds to CUG triplet repeat expansion in myotonic dystrophy muscle cells by sequestering the target RNAs. Together with RNA binding proteins RBPMS and RBFOX2, activates vascular smooth muscle cells alternative splicing events. Regulates NCOR2 alternative splicing. Seems to regulate expression and localization of ITGA3 by transporting it from the nucleus to cytoplasm at adhesion plaques. May play a role in myotonic dystrophy pathophysiology (DM). This is Muscleblind-like protein 2 (Mbnl2) from Mus musculus (Mouse).